The primary structure comprises 131 residues: Small ribosomal subunit protein uS8 (131 aa).

It belongs to the universal ribosomal protein uS8 family. As to quaternary structure, part of the 30S ribosomal subunit. Contacts proteins S5 and S12.

Functionally, one of the primary rRNA binding proteins, it binds directly to 16S rRNA central domain where it helps coordinate assembly of the platform of the 30S subunit. This chain is Small ribosomal subunit protein uS8, found in Variovorax paradoxus (strain S110).